The chain runs to 274 residues: Ribose-5-phosphate isomerase (274 aa).

It belongs to the ribose 5-phosphate isomerase family.

It is found in the cytoplasm. It carries out the reaction aldehydo-D-ribose 5-phosphate = D-ribulose 5-phosphate. The protein operates within carbohydrate degradation; pentose phosphate pathway; D-ribose 5-phosphate from D-ribulose 5-phosphate (non-oxidative stage): step 1/1. This Kluyveromyces lactis (strain ATCC 8585 / CBS 2359 / DSM 70799 / NBRC 1267 / NRRL Y-1140 / WM37) (Yeast) protein is Ribose-5-phosphate isomerase (RKI1).